The primary structure comprises 538 residues: Phosphatidylethanolamine transferase Mcr-2 (538 aa).

Helical transmembrane passes span 14–34 (PFVLMGLVALFLAATANLTFF), 47–67 (LGFIISMAVAVMGAMLLIVVL), 72–92 (YVLKPVLILLLIMGAVTSYFT), 121–141 (LAFFVRIIGLGVLPSVLVAVA), and 161–181 (VSLVLLLVPIGLFSSQYASFF). Zn(2+) is bound by residues Glu-244 and Thr-283. 3 disulfides stabilise this stretch: Cys-279–Cys-289, Cys-354–Cys-362, and Cys-412–Cys-420. The residue at position 283 (Thr-283) is a Phosphothreonine. The Zn(2+) site is built by Asp-463 and His-464.

Belongs to the phosphoethanolamine transferase family. Monomer. In terms of processing, phosphorylated at Thr-283; may represent an intermediate in the catalytic mechanism.

It is found in the cell inner membrane. It catalyses the reaction lipid A (E. coli) + a 1,2-diacyl-sn-glycero-3-phosphoethanolamine + H(+) = lipid A 4'-(2-aminoethyl diphosphate) (E. coli) + a 1,2-diacyl-sn-glycerol. Probably catalyzes the addition of a phosphoethanolamine moiety to lipid A. Phosphoethanolamine modification of lipid A confers polymyxin resistance. Confers resistance to polymyxin-type antibiotics such as colistin. This chain is Phosphatidylethanolamine transferase Mcr-2, found in Escherichia coli.